A 449-amino-acid polypeptide reads, in one-letter code: Naphthalene 1,2-dioxygenase system, large oxygenase component (449 aa).

The Rieske domain maps to 39–137; sequence WLFLTHDSLI…LNKKCLGLKE (99 aa). [2Fe-2S] cluster is bound by residues Cys-81, His-83, Cys-101, and His-104. Fe cation contacts are provided by His-208, His-213, and Asp-362.

Belongs to the bacterial ring-hydroxylating dioxygenase alpha subunit family. As to quaternary structure, the naphthalene dioxygenase (NDO) multicomponent enzyme system is composed of an electron transfer component and a dioxygenase component (iron sulfur protein (ISP)). The electron transfer component is composed of a ferredoxin reductase (NdoR) and a ferredoxin (NdoA), and the dioxygenase component is formed of a heterohexamer (trimer of heterodimers) of three large alpha subunits (NdoB) and three small beta subunits (NdoC). [2Fe-2S] cluster serves as cofactor. Fe(2+) is required as a cofactor.

It catalyses the reaction naphthalene + NADH + O2 + H(+) = (1R,2S)-1,2-dihydronaphthalene-1,2-diol + NAD(+). It functions in the pathway aromatic compound metabolism; naphthalene degradation. Component of the naphthalene dioxygenase (NDO) multicomponent enzyme system which catalyzes the incorporation of both atoms of molecular oxygen into naphthalene to form cis-(1R,2S)-dihydroxy-1,2-dihydronaphthalene. The alpha subunit has a catalytic role in the holoenzyme. Also able to catalyze the cis-dihydroxylation of biphenyl and phenanthrene. The chain is Naphthalene 1,2-dioxygenase system, large oxygenase component from Pseudomonas putida (Arthrobacter siderocapsulatus).